The following is a 98-amino-acid chain: NADH-ubiquinone oxidoreductase chain 4L (98 aa).

Transmembrane regions (helical) follow at residues 2 to 22, 29 to 49, and 61 to 81; these read PPIF…TLIF, SLLC…LIIL, and ILLL…LVMV.

Belongs to the complex I subunit 4L family. As to quaternary structure, core subunit of respiratory chain NADH dehydrogenase (Complex I) which is composed of 45 different subunits.

It is found in the mitochondrion inner membrane. It catalyses the reaction a ubiquinone + NADH + 5 H(+)(in) = a ubiquinol + NAD(+) + 4 H(+)(out). In terms of biological role, core subunit of the mitochondrial membrane respiratory chain NADH dehydrogenase (Complex I) which catalyzes electron transfer from NADH through the respiratory chain, using ubiquinone as an electron acceptor. Part of the enzyme membrane arm which is embedded in the lipid bilayer and involved in proton translocation. In Avahi occidentalis (Western woolly lemur), this protein is NADH-ubiquinone oxidoreductase chain 4L (MT-ND4L).